Consider the following 185-residue polypeptide: Peptide methionine sulfoxide reductase MsrA (185 aa).

Cysteine 12 is an active-site residue.

It belongs to the MsrA Met sulfoxide reductase family.

It catalyses the reaction L-methionyl-[protein] + [thioredoxin]-disulfide + H2O = L-methionyl-(S)-S-oxide-[protein] + [thioredoxin]-dithiol. It carries out the reaction [thioredoxin]-disulfide + L-methionine + H2O = L-methionine (S)-S-oxide + [thioredoxin]-dithiol. Its function is as follows. Has an important function as a repair enzyme for proteins that have been inactivated by oxidation. Catalyzes the reversible oxidation-reduction of methionine sulfoxide in proteins to methionine. In Granulibacter bethesdensis (strain ATCC BAA-1260 / CGDNIH1), this protein is Peptide methionine sulfoxide reductase MsrA.